We begin with the raw amino-acid sequence, 227 residues long: Cytochrome c oxidase subunit 2 (227 aa).

Topologically, residues 1–26 (MNTWMNFNLQNSNSPLMEQLMFFHNH) are mitochondrial intermembrane. A helical transmembrane segment spans residues 27–48 (SMLIILLITILVGYIMSSLLYN). Topologically, residues 49–62 (KLYNRYLLESQNVE) are mitochondrial matrix. A helical membrane pass occupies residues 63-82 (IIWTILPAFMLIFIALPSLR). Residues 83-227 (LLYLLDDSNS…SFIKWISSNS (145 aa)) are Mitochondrial intermembrane-facing. Cu cation-binding residues include H161, C196, E198, C200, H204, and M207. E198 lines the Mg(2+) pocket.

This sequence belongs to the cytochrome c oxidase subunit 2 family. In terms of assembly, component of the cytochrome c oxidase (complex IV, CIV), a multisubunit enzyme composed of a catalytic core of 3 subunits and several supernumerary subunits. The complex exists as a monomer or a dimer and forms supercomplexes (SCs) in the inner mitochondrial membrane with ubiquinol-cytochrome c oxidoreductase (cytochrome b-c1 complex, complex III, CIII). The cofactor is Cu cation.

It localises to the mitochondrion inner membrane. It catalyses the reaction 4 Fe(II)-[cytochrome c] + O2 + 8 H(+)(in) = 4 Fe(III)-[cytochrome c] + 2 H2O + 4 H(+)(out). In terms of biological role, component of the cytochrome c oxidase, the last enzyme in the mitochondrial electron transport chain which drives oxidative phosphorylation. The respiratory chain contains 3 multisubunit complexes succinate dehydrogenase (complex II, CII), ubiquinol-cytochrome c oxidoreductase (cytochrome b-c1 complex, complex III, CIII) and cytochrome c oxidase (complex IV, CIV), that cooperate to transfer electrons derived from NADH and succinate to molecular oxygen, creating an electrochemical gradient over the inner membrane that drives transmembrane transport and the ATP synthase. Cytochrome c oxidase is the component of the respiratory chain that catalyzes the reduction of oxygen to water. Electrons originating from reduced cytochrome c in the intermembrane space (IMS) are transferred via the dinuclear copper A center (CU(A)) of subunit 2 and heme A of subunit 1 to the active site in subunit 1, a binuclear center (BNC) formed by heme A3 and copper B (CU(B)). The BNC reduces molecular oxygen to 2 water molecules using 4 electrons from cytochrome c in the IMS and 4 protons from the mitochondrial matrix. This is Cytochrome c oxidase subunit 2 (COII) from Ctenocephalides felis (Cat flea).